Here is a 209-residue protein sequence, read N- to C-terminus: SAGA-associated factor 11 homolog 1 (209 aa).

A disordered region spans residues 1–36; it reads MSRTIVVKNPRTSGKDEDKAQIPSQDELPSGSSGAK. The SGF11-type zinc finger occupies 120-141; it reads CCCPNCERMVAAVRFAPHLQTC. The segment covering 156 to 166 has biased composition (low complexity); that stretch reads LTVSSRSSSTS. Residues 156 to 209 form a disordered region; the sequence is LTVSSRSSSTSTGGGQANEKSTDDEDWSLDSRPGKSTKNSRNKGSKKNQKNKLK. Positions 193-209 are enriched in basic residues; the sequence is KNSRNKGSKKNQKNKLK.

It belongs to the SGF11 family. Component of some SAGA transcription coactivator-HAT complexes, at least composed of Ada2b, not/nonstop, Pcaf/Gcn5, Sgf11 and Spt3. Within the SAGA complex, Sgf11, e(y)2, and not/nonstop form an additional subcomplex of SAGA called the DUB module (deubiquitination module). Interacts directly with not/nonstop. Interacts with the AMEX complex component xmas-2. Interacts with Cbp80; important for promoter recruitment of Sgf11 that is not associated with the DUB module.

The protein resides in the nucleus. Its subcellular location is the nucleoplasm. It localises to the cytoplasm. In terms of biological role, component of the transcription regulatory histone acetylation (HAT) complex SAGA, a multiprotein complex that activates transcription by remodeling chromatin and mediating histone acetylation and deubiquitination. Within the SAGA complex, participates in a subcomplex that specifically deubiquitinates histone H2B. The SAGA complex is recruited to specific gene promoters by activators, where it is required for transcription. Required for nuclear receptor-mediated transactivation. Binds independently on SAGA to promoters in an RNA-dependent manner. Binds to mRNA and is essential for total mRNA export from the nucleus. Required to counteract heterochromatin silencing. Controls the development of neuronal connectivity in visual system by being required for accurate axon targeting in the optic lobe. Required for expression of ecdysone-induced genes such as br/broad. The chain is SAGA-associated factor 11 homolog 1 from Drosophila willistoni (Fruit fly).